The chain runs to 196 residues: Probable malonic semialdehyde reductase RutE (196 aa).

It belongs to the nitroreductase family. HadB/RutE subfamily. The cofactor is FMN.

The catalysed reaction is 3-hydroxypropanoate + NADP(+) = 3-oxopropanoate + NADPH + H(+). Functionally, may reduce toxic product malonic semialdehyde to 3-hydroxypropionic acid, which is excreted. The protein is Probable malonic semialdehyde reductase RutE of Shigella dysenteriae serotype 1 (strain Sd197).